Consider the following 78-residue polypeptide: UPF0270 protein YPO0179/y3960/YP_0178 (78 aa).

Belongs to the UPF0270 family.

The polypeptide is UPF0270 protein YPO0179/y3960/YP_0178 (Yersinia pestis).